A 61-amino-acid chain; its full sequence is Large ribosomal subunit protein bL32 (61 aa).

The tract at residues 1 to 44 (MAVQQNRKSRSRRDMRRSHDALTENALTVDQATGETHRRHHVTK) is disordered. Residues 7–16 (RKSRSRRDMR) show a composition bias toward basic residues. The span at 25-34 (NALTVDQATG) shows a compositional bias: polar residues.

The protein belongs to the bacterial ribosomal protein bL32 family.

The chain is Large ribosomal subunit protein bL32 from Acinetobacter baumannii (strain AB307-0294).